The primary structure comprises 355 residues: DNA-binding protein RHL1 (355 aa).

3 disordered regions span residues 1–26 (MVRASSSKKGGSKGGDKDDAESKQRK), 181–215 (DFQGGAGGAASVKKLASPEIGSQPTETDSPEVDNE), and 229–355 (IQVT…SSKA). The segment covering 14–23 (GGDKDDAESK) has biased composition (basic and acidic residues). Composition is skewed to low complexity over residues 230-246 (QVTPPVQLTPPVQVTPV) and 260-274 (AETSSEASSGESEGN). 2 stretches are compositionally biased toward basic and acidic residues: residues 281–296 (KPLLEPESSTRSREES) and 309–326 (LPEELPAKREKLKSKDSK). The segment covering 344-355 (AGTSKAKSSSKA) has biased composition (low complexity).

As to quaternary structure, interacts with BIN4 and TOP6A, but not with TOP6B. Expressed inproliferating and endoreduplicating cells.

Its subcellular location is the nucleus. Functionally, component of the DNA topoisomerase VI complex involved in chromatin organization and progression of endoreduplication cycles. Binds to DNA. Required for endoreduplication beyond 8C. In Arabidopsis thaliana (Mouse-ear cress), this protein is DNA-binding protein RHL1 (RHL1).